A 361-amino-acid chain; its full sequence is UDP-D-xylose:L-fucose alpha-1,3-D-xylosyltransferase 1 (361 aa).

The tract at residues 1–21 (MEQKQHILKQSTFSSSPSSYS) is disordered. Over 1 to 34 (MEQKQHILKQSTFSSSPSSYSSISDRPISLLSRN) the chain is Cytoplasmic. Over residues 11–21 (STFSSSPSSYS) the composition is skewed to low complexity. Residues 35–55 (GLLLLLLALVLLLGVLLPWPG) form a helical; Signal-anchor for type II membrane protein membrane-spanning segment. Residues 56–361 (SPLFLFPNRL…ALESPLGKLE (306 aa)) lie on the Lumenal side of the membrane. 2 N-linked (GlcNAc...) asparagine glycosylation sites follow: Asn-92 and Asn-167. The DXD motif motif lies at 190-192 (DVD). N-linked (GlcNAc...) asparagine glycosylation is found at Asn-222 and Asn-286.

It belongs to the glycosyltransferase 77 family. It depends on Mn(2+) as a cofactor. Mg(2+) serves as cofactor. Glycosylated. Expressed in roots, rosette leaves, cauline leaves and stems.

It is found in the golgi apparatus membrane. Catalyzes the transfer of D-xylose from UDP-alpha-D-xylose onto L-fucose. Probably involved in the biosynthesis of rhamnogalacturonan II (RG-II) through xylosylation of the internal fucose moiety of the A-chain of RG-II, a structurally complex pectic polysaccharide of the primary cell wall. RG-II is essential for the cell wall integrity of rapidly growing tissues such as roots and pollen tube growth and elongation. This Arabidopsis thaliana (Mouse-ear cress) protein is UDP-D-xylose:L-fucose alpha-1,3-D-xylosyltransferase 1.